The primary structure comprises 545 residues: Cryptochrome-1 (545 aa).

A Photolyase/cryptochrome alpha/beta domain is found at 3 to 140 (INNILWFRHG…RCVENVSHTL (138 aa)). FAD contacts are provided by residues arginine 237, serine 265, serine 267, glutamine 308, histidine 375, 407-409 (DAD), cysteine 413, and asparagine 416.

This sequence belongs to the DNA photolyase class-1 family. In terms of assembly, interacts with tim and per; promoted by light conditions. FAD is required as a cofactor.

It localises to the cytoplasm. The protein localises to the perinuclear region. It is found in the nucleus. Its function is as follows. Blue light-dependent regulator that is the input of the circadian feedback loop. Has no photolyase activity for cyclobutane pyrimidine dimers or 6-4 photoproducts. Regulation of expression by light suggests a role in photoreception for locomotor activity rhythms. Functions, together with per, as a transcriptional repressor required for the oscillation of peripheral circadian clocks and for the correct specification of clock cells. Genes directly activated by the transcription factors Clock (Clk) and cycle (cyc) are repressed by cry. In Anopheles gambiae (African malaria mosquito), this protein is Cryptochrome-1.